We begin with the raw amino-acid sequence, 192 residues long: Type 1 phosphatases regulator YPI2 (192 aa).

Disordered regions lie at residues 1–53 (MLQR…GKHK) and 65–192 (EFGQ…PVQK). The span at 8–18 (QTSSSTQTETT) shows a compositional bias: low complexity. A compositionally biased stretch (basic and acidic residues) spans 25 to 49 (RRPETRQKEDSKVKWTEDVIDNEHM). Over residues 69-79 (SSDESSDSSSD) the composition is skewed to low complexity. Residues 86–103 (YERNNDFDQNHRHSHNFD) are compositionally biased toward basic and acidic residues. Residues 134 to 148 (KGNTGMSKPSSSSPD) are compositionally biased toward polar residues. Residues 157-169 (IHKRNKKVRKPKR) show a composition bias toward basic residues.

This sequence belongs to the YPI1 family.

It localises to the nucleus. Regulator of type 1 phosphatases which maintains protein phosphatase activity under strict control. The chain is Type 1 phosphatases regulator YPI2 (YPI2) from Scheffersomyces stipitis (strain ATCC 58785 / CBS 6054 / NBRC 10063 / NRRL Y-11545) (Yeast).